Here is a 460-residue protein sequence, read N- to C-terminus: Chromosomal replication initiator protein DnaA (460 aa).

Residues 1-83 are domain I, interacts with DnaA modulators; the sequence is MENIWLEAQT…EFHVADEKPE (83 aa). Basic and acidic residues predominate over residues 78–121; the sequence is ADEKPEAAPEEKPEKEGKPAREKEKDKDKEKEKDREKEKDKKEL. The disordered stretch occupies residues 78 to 122; it reads ADEKPEAAPEEKPEKEGKPAREKEKDKDKEKEKDREKEKDKKELV. The interval 83–123 is domain II; it reads EAAPEEKPEKEGKPAREKEKDKDKEKEKDREKEKDKKELVP. Residues 124–340 form a domain III, AAA+ region region; it reads NLNPKYTFES…GMLIRLEAFA (217 aa). ATP contacts are provided by Gly168, Gly170, Lys171, and Thr172. The interval 341-460 is domain IV, binds dsDNA; that stretch reads SLTGQEITLS…VEDIRKKLFT (120 aa).

It belongs to the DnaA family. In terms of assembly, oligomerizes as a right-handed, spiral filament on DNA at oriC.

It localises to the cytoplasm. Functionally, plays an essential role in the initiation and regulation of chromosomal replication. ATP-DnaA binds to the origin of replication (oriC) to initiate formation of the DNA replication initiation complex once per cell cycle. Binds the DnaA box (a 9 base pair repeat at the origin) and separates the double-stranded (ds)DNA. Forms a right-handed helical filament on oriC DNA; dsDNA binds to the exterior of the filament while single-stranded (ss)DNA is stabiized in the filament's interior. The ATP-DnaA-oriC complex binds and stabilizes one strand of the AT-rich DNA unwinding element (DUE), permitting loading of DNA polymerase. After initiation quickly degrades to an ADP-DnaA complex that is not apt for DNA replication. Binds acidic phospholipids. The chain is Chromosomal replication initiator protein DnaA from Geobacter sp. (strain M21).